The sequence spans 470 residues: Serine hydroxymethyltransferase, cytosolic (470 aa).

Residues 1–11 (MSAYALSQSHR) are compositionally biased toward polar residues. The segment at 1 to 23 (MSAYALSQSHRQLTEGHLKDTDP) is disordered. An N-acetylserine modification is found at Ser2. Positions 12–23 (QLTEGHLKDTDP) are enriched in basic and acidic residues. At Lys249 the chain carries N6-(pyridoxal phosphate)lysine.

It belongs to the SHMT family. In terms of assembly, homotetramer. It depends on pyridoxal 5'-phosphate as a cofactor.

It is found in the cytoplasm. The catalysed reaction is (6R)-5,10-methylene-5,6,7,8-tetrahydrofolate + glycine + H2O = (6S)-5,6,7,8-tetrahydrofolate + L-serine. It participates in one-carbon metabolism; tetrahydrofolate interconversion. Functionally, interconversion of serine and glycine. This is Serine hydroxymethyltransferase, cytosolic (SHM2) from Candida albicans (strain SC5314 / ATCC MYA-2876) (Yeast).